Here is a 482-residue protein sequence, read N- to C-terminus: UDP-glycosyltransferase 1 (482 aa).

Asparagine 243 carries an N-linked (GlcNAc...) asparagine glycan. The helical transmembrane segment at 450–470 (IYLVYALVLGSAWWIGKTILG) threads the bilayer.

It belongs to the glycosyltransferase 28 family.

The protein localises to the membrane. It catalyses the reaction exophillate aglycone + UDP-alpha-D-glucose = exophillate + UDP + H(+). The protein operates within secondary metabolite biosynthesis. Its function is as follows. Acts as a depside 2-O-glucosyltransferase that catalyzes the first glycosylation step during phaeomoniecin D biosynthesis by producing the intermediate exophillic acid which is further O-galactosylated into phaeomoniecin D by the C-galactosyltransferase OGT2. This chain is UDP-glycosyltransferase 1, found in Phaeomoniella chlamydospora (Phaeoacremonium chlamydosporum).